Reading from the N-terminus, the 98-residue chain is Large ribosomal subunit protein uL23 (98 aa).

It belongs to the universal ribosomal protein uL23 family. In terms of assembly, part of the 50S ribosomal subunit. Contacts protein L29, and trigger factor when it is bound to the ribosome.

In terms of biological role, one of the early assembly proteins it binds 23S rRNA. One of the proteins that surrounds the polypeptide exit tunnel on the outside of the ribosome. Forms the main docking site for trigger factor binding to the ribosome. The protein is Large ribosomal subunit protein uL23 of Frankia alni (strain DSM 45986 / CECT 9034 / ACN14a).